The sequence spans 279 residues: NAD kinase (279 aa).

Asp61 serves as the catalytic Proton acceptor. Residues 61–62 (DG), 138–139 (ND), Lys149, Lys166, Asp168, and 179–184 (TGYSFS) contribute to the NAD(+) site.

The protein belongs to the NAD kinase family. The cofactor is a divalent metal cation.

The protein localises to the cytoplasm. The enzyme catalyses NAD(+) + ATP = ADP + NADP(+) + H(+). Involved in the regulation of the intracellular balance of NAD and NADP, and is a key enzyme in the biosynthesis of NADP. Catalyzes specifically the phosphorylation on 2'-hydroxyl of the adenosine moiety of NAD to yield NADP. This chain is NAD kinase, found in Borreliella burgdorferi (strain ATCC 35210 / DSM 4680 / CIP 102532 / B31) (Borrelia burgdorferi).